A 145-amino-acid chain; its full sequence is Large ribosomal subunit protein uL15 (145 aa).

A disordered region spans residues 1 to 55 (MSLLKTLAPKAGSKHAPKRIGRGIGSGMGGTATKGHKGQLARTGGTVRRGFEGGQ). The span at 12-21 (GSKHAPKRIG) shows a compositional bias: basic residues. The segment covering 22–32 (RGIGSGMGGTA) has biased composition (gly residues).

The protein belongs to the universal ribosomal protein uL15 family. In terms of assembly, part of the 50S ribosomal subunit.

Its function is as follows. Binds to the 23S rRNA. The protein is Large ribosomal subunit protein uL15 of Bdellovibrio bacteriovorus (strain ATCC 15356 / DSM 50701 / NCIMB 9529 / HD100).